The chain runs to 224 residues: uncharacterized protein (224 aa).

The first 30 residues, 1–30, serve as a signal peptide directing secretion; sequence MSRSSSSMATVLVVLMVVSAGGLSPPCAAA. Asn-141 carries N-linked (GlcNAc...) asparagine glycosylation.

The protein localises to the secreted. This is an uncharacterized protein from Oryza sativa subsp. japonica (Rice).